We begin with the raw amino-acid sequence, 261 residues long: Imidazole glycerol phosphate synthase subunit HisF (261 aa).

Catalysis depends on residues aspartate 16 and aspartate 135.

This sequence belongs to the HisA/HisF family. Heterodimer of HisH and HisF.

Its subcellular location is the cytoplasm. The catalysed reaction is 5-[(5-phospho-1-deoxy-D-ribulos-1-ylimino)methylamino]-1-(5-phospho-beta-D-ribosyl)imidazole-4-carboxamide + L-glutamine = D-erythro-1-(imidazol-4-yl)glycerol 3-phosphate + 5-amino-1-(5-phospho-beta-D-ribosyl)imidazole-4-carboxamide + L-glutamate + H(+). It participates in amino-acid biosynthesis; L-histidine biosynthesis; L-histidine from 5-phospho-alpha-D-ribose 1-diphosphate: step 5/9. IGPS catalyzes the conversion of PRFAR and glutamine to IGP, AICAR and glutamate. The HisF subunit catalyzes the cyclization activity that produces IGP and AICAR from PRFAR using the ammonia provided by the HisH subunit. The polypeptide is Imidazole glycerol phosphate synthase subunit HisF (Mycolicibacterium gilvum (strain PYR-GCK) (Mycobacterium gilvum (strain PYR-GCK))).